A 129-amino-acid chain; its full sequence is Small ribosomal subunit protein uS9 (129 aa).

It belongs to the universal ribosomal protein uS9 family.

The chain is Small ribosomal subunit protein uS9 from Helicobacter pylori (strain Shi470).